Here is a 584-residue protein sequence, read N- to C-terminus: Membrane protein insertase YidC (584 aa).

5 consecutive transmembrane segments (helical) span residues 5-25, 358-378, 428-448, 478-498, and 516-536; these read SVIG…FMAP, FIGN…LVTY, LGGC…FYVF, IPLY…AVFL, and IYIF…GLGL. The tract at residues 563-584 is disordered; that stretch reads ALSPVVAAPPKAPKKKKNARKR. Over residues 574–584 the composition is skewed to basic residues; that stretch reads APKKKKNARKR.

The protein belongs to the OXA1/ALB3/YidC family. Type 1 subfamily. Interacts with the Sec translocase complex via SecD. Specifically interacts with transmembrane segments of nascent integral membrane proteins during membrane integration.

The protein resides in the cell inner membrane. In terms of biological role, required for the insertion and/or proper folding and/or complex formation of integral membrane proteins into the membrane. Involved in integration of membrane proteins that insert both dependently and independently of the Sec translocase complex, as well as at least some lipoproteins. Aids folding of multispanning membrane proteins. This is Membrane protein insertase YidC from Prosthecochloris aestuarii (strain DSM 271 / SK 413).